Reading from the N-terminus, the 59-residue chain is UPF0434 protein VC_1876 (59 aa).

This sequence belongs to the UPF0434 family.

This chain is UPF0434 protein VC_1876, found in Vibrio cholerae serotype O1 (strain ATCC 39315 / El Tor Inaba N16961).